Consider the following 342-residue polypeptide: tRNA-specific 2-thiouridylase MnmA (342 aa).

ATP contacts are provided by residues 6-13 and Leu32; that span reads LLSGGVDS. Cys92 serves as the catalytic Nucleophile. An intrachain disulfide couples Cys92 to Cys191. Gly116 lines the ATP pocket. Residues 138–140 form an interaction with tRNA region; sequence KDQ. The active-site Cysteine persulfide intermediate is Cys191. An interaction with tRNA region spans residues 293 to 294; the sequence is RY.

Belongs to the MnmA/TRMU family.

The protein resides in the cytoplasm. The catalysed reaction is S-sulfanyl-L-cysteinyl-[protein] + uridine(34) in tRNA + AH2 + ATP = 2-thiouridine(34) in tRNA + L-cysteinyl-[protein] + A + AMP + diphosphate + H(+). Functionally, catalyzes the 2-thiolation of uridine at the wobble position (U34) of tRNA, leading to the formation of s(2)U34. In Helicobacter pylori (strain ATCC 700392 / 26695) (Campylobacter pylori), this protein is tRNA-specific 2-thiouridylase MnmA.